The chain runs to 403 residues: F-box/LRR-repeat protein At1g06630 (403 aa).

One can recognise an F-box domain in the interval 11 to 59 (RDAINWLPDEILGKILSLLATKQAVSTSVLSKKWRTLFKLVDTLEFDDS). LRR repeat units lie at residues 239-262 (LPNL…NLES) and 288-312 (IRNV…KYGL).

The chain is F-box/LRR-repeat protein At1g06630 from Arabidopsis thaliana (Mouse-ear cress).